The chain runs to 129 residues: Follitropin subunit beta (129 aa).

The N-terminal stretch at 1-20 (MKSVQLCFLFCCWRAICCKS) is a signal peptide. 6 disulfide bridges follow: C21-C69, C35-C84, C38-C122, C46-C100, C50-C102, and C105-C112. Residues N25 and N42 are each glycosylated (N-linked (GlcNAc...) asparagine).

It belongs to the glycoprotein hormones subunit beta family. As to quaternary structure, heterodimer. The active follitropin is a heterodimer composed of an alpha chain/CGA shared with other hormones and a unique beta chain/FSHB shown here.

The protein resides in the secreted. In terms of biological role, together with the alpha chain CGA constitutes follitropin, the follicle-stimulating hormone, and provides its biological specificity to the hormone heterodimer. Binds FSHR, a G protein-coupled receptor, on target cells to activate downstream signaling pathways. Follitropin is involved in follicle development and spermatogenesis in reproductive organs. This is Follitropin subunit beta (FSHB) from Ailuropoda melanoleuca (Giant panda).